A 566-amino-acid polypeptide reads, in one-letter code: Arginine--tRNA ligase (566 aa).

The 'HIGH' region motif lies at 121–131 (ANPNGPFHIGH).

It belongs to the class-I aminoacyl-tRNA synthetase family.

It is found in the cytoplasm. The catalysed reaction is tRNA(Arg) + L-arginine + ATP = L-arginyl-tRNA(Arg) + AMP + diphosphate. This chain is Arginine--tRNA ligase, found in Methanococcus maripaludis (strain C5 / ATCC BAA-1333).